The primary structure comprises 171 residues: S-ribosylhomocysteine lyase (171 aa).

The Fe cation site is built by His54, His58, and Cys128.

It belongs to the LuxS family. In terms of assembly, homodimer. It depends on Fe cation as a cofactor.

It catalyses the reaction S-(5-deoxy-D-ribos-5-yl)-L-homocysteine = (S)-4,5-dihydroxypentane-2,3-dione + L-homocysteine. Its function is as follows. Involved in the synthesis of autoinducer 2 (AI-2) which is secreted by bacteria and is used to communicate both the cell density and the metabolic potential of the environment. The regulation of gene expression in response to changes in cell density is called quorum sensing. Catalyzes the transformation of S-ribosylhomocysteine (RHC) to homocysteine (HC) and 4,5-dihydroxy-2,3-pentadione (DPD). This is S-ribosylhomocysteine lyase from Citrobacter koseri (strain ATCC BAA-895 / CDC 4225-83 / SGSC4696).